A 211-amino-acid polypeptide reads, in one-letter code: UPF0056 membrane protein YvbG (211 aa).

6 helical membrane-spanning segments follow: residues 1–21 (MMFSFIVHVFISLFAVSNPIG), 47–67 (ILSFFILAAFLVFGHLIFKLF), 69–89 (INIHALRVAGGIFIFGIAYNL), 114–134 (ISVTPLSIPIIAGPGTIATVM), 150–170 (MIGIAAVIALTFLFFHYSAFI), and 188–208 (LILAVVAVGMIGAGLKGMFPV).

Belongs to the UPF0056 (MarC) family.

It is found in the cell membrane. The chain is UPF0056 membrane protein YvbG (yvbG) from Bacillus subtilis (strain 168).